The primary structure comprises 460 residues: Cysteine--tRNA ligase (460 aa).

Position 28 (cysteine 28) interacts with Zn(2+). Residues 30–40 carry the 'HIGH' region motif; it reads MTVYDYCHLGH. Zn(2+) contacts are provided by cysteine 209, histidine 234, and glutamate 238. Residues 266–270 carry the 'KMSKS' region motif; sequence KMSKS. Residue lysine 269 coordinates ATP.

This sequence belongs to the class-I aminoacyl-tRNA synthetase family. As to quaternary structure, monomer. The cofactor is Zn(2+).

It localises to the cytoplasm. It carries out the reaction tRNA(Cys) + L-cysteine + ATP = L-cysteinyl-tRNA(Cys) + AMP + diphosphate. This is Cysteine--tRNA ligase from Pseudomonas putida (strain ATCC 47054 / DSM 6125 / CFBP 8728 / NCIMB 11950 / KT2440).